The following is a 101-amino-acid chain: NADH-quinone oxidoreductase subunit K (101 aa).

3 helical membrane-spanning segments follow: residues 4–24 (LAHYLVLGAILFAISIVGIFL), 30–50 (IIILMAIELMLLAVNTNFVAF), and 61–81 (IFVFFVLTVAAAEAAIGLAIL).

Belongs to the complex I subunit 4L family. As to quaternary structure, NDH-1 is composed of 14 different subunits. Subunits NuoA, H, J, K, L, M, N constitute the membrane sector of the complex.

Its subcellular location is the cell inner membrane. It catalyses the reaction a quinone + NADH + 5 H(+)(in) = a quinol + NAD(+) + 4 H(+)(out). Its function is as follows. NDH-1 shuttles electrons from NADH, via FMN and iron-sulfur (Fe-S) centers, to quinones in the respiratory chain. The immediate electron acceptor for the enzyme in this species is believed to be ubiquinone. Couples the redox reaction to proton translocation (for every two electrons transferred, four hydrogen ions are translocated across the cytoplasmic membrane), and thus conserves the redox energy in a proton gradient. This is NADH-quinone oxidoreductase subunit K from Paraburkholderia phymatum (strain DSM 17167 / CIP 108236 / LMG 21445 / STM815) (Burkholderia phymatum).